Reading from the N-terminus, the 590-residue chain is Proline--tRNA ligase (590 aa).

The protein belongs to the class-II aminoacyl-tRNA synthetase family. ProS type 1 subfamily. In terms of assembly, homodimer.

The protein localises to the cytoplasm. The catalysed reaction is tRNA(Pro) + L-proline + ATP = L-prolyl-tRNA(Pro) + AMP + diphosphate. Catalyzes the attachment of proline to tRNA(Pro) in a two-step reaction: proline is first activated by ATP to form Pro-AMP and then transferred to the acceptor end of tRNA(Pro). As ProRS can inadvertently accommodate and process non-cognate amino acids such as alanine and cysteine, to avoid such errors it has two additional distinct editing activities against alanine. One activity is designated as 'pretransfer' editing and involves the tRNA(Pro)-independent hydrolysis of activated Ala-AMP. The other activity is designated 'posttransfer' editing and involves deacylation of mischarged Ala-tRNA(Pro). The misacylated Cys-tRNA(Pro) is not edited by ProRS. The chain is Proline--tRNA ligase from Leifsonia xyli subsp. xyli (strain CTCB07).